The chain runs to 334 residues: Anthranilate phosphoribosyltransferase (334 aa).

5-phospho-alpha-D-ribose 1-diphosphate-binding positions include glycine 79, 82–83, serine 87, 89–92, 107–115, and serine 119; these read GD, NIST, and KHGNRSISS. Glycine 79 serves as a coordination point for anthranilate. Serine 91 contributes to the Mg(2+) binding site. Position 110 (asparagine 110) interacts with anthranilate. Arginine 165 contributes to the anthranilate binding site. Positions 224 and 225 each coordinate Mg(2+).

The protein belongs to the anthranilate phosphoribosyltransferase family. Homodimer. Mg(2+) is required as a cofactor.

The catalysed reaction is N-(5-phospho-beta-D-ribosyl)anthranilate + diphosphate = 5-phospho-alpha-D-ribose 1-diphosphate + anthranilate. It functions in the pathway amino-acid biosynthesis; L-tryptophan biosynthesis; L-tryptophan from chorismate: step 2/5. Its function is as follows. Catalyzes the transfer of the phosphoribosyl group of 5-phosphorylribose-1-pyrophosphate (PRPP) to anthranilate to yield N-(5'-phosphoribosyl)-anthranilate (PRA). In Streptococcus sanguinis (strain SK36), this protein is Anthranilate phosphoribosyltransferase.